We begin with the raw amino-acid sequence, 69 residues long: DNA-directed RNA polymerase subunit omega (69 aa).

This sequence belongs to the RNA polymerase subunit omega family. In terms of assembly, the RNAP catalytic core consists of 2 alpha, 1 beta, 1 beta' and 1 omega subunit. When a sigma factor is associated with the core the holoenzyme is formed, which can initiate transcription.

It catalyses the reaction RNA(n) + a ribonucleoside 5'-triphosphate = RNA(n+1) + diphosphate. Functionally, promotes RNA polymerase assembly. Latches the N- and C-terminal regions of the beta' subunit thereby facilitating its interaction with the beta and alpha subunits. This is DNA-directed RNA polymerase subunit omega from Geotalea daltonii (strain DSM 22248 / JCM 15807 / FRC-32) (Geobacter daltonii).